The following is a 371-amino-acid chain: Liposome tubulation protein MamY (371 aa).

Residues 1 to 18 (MLMNFVNNVSKTINGGAR) are Cytoplasmic-facing. The chain crosses the membrane as a helical span at residues 19–39 (IVYVGSFSWAVLSLLFVTAFS). Over 40–51 (GWNNIFSMLPHE) the chain is Lumenal. Residues 52–72 (IFILVLTISLPIALIVLIFML) form a helical membrane-spanning segment. The Cytoplasmic portion of the chain corresponds to 73–371 (SQIVRTVESV…LIDGTPISDA (299 aa)).

This sequence belongs to the magnetosome MamY family. In terms of assembly, probably interacts with MamX and MamZ proteins.

The protein resides in the magnetosome membrane. Its function is as follows. May be involved in constriction of the cell inner membrane to form mature magnetosomes. Binds cardiolipin and liposomes. May function with MamX, MamZ amd Mms6 in biomineralization. This Magnetospirillum gryphiswaldense (strain DSM 6361 / JCM 21280 / NBRC 15271 / MSR-1) protein is Liposome tubulation protein MamY.